The primary structure comprises 97 residues: Pyrin domain-containing protein 2 (97 aa).

The Pyrin domain occupies 1-94 (MASSAELDFN…SGRADEHCVM (94 aa)).

Interacts with PYCARD/ASC (via pyrin domain). Interacts with NLRP2 (via pyrin domain). In terms of tissue distribution, predominantly expressed in peripheral blood. Weakly expressed in testis.

The protein localises to the cytoplasm. Its subcellular location is the nucleus. In terms of biological role, may play a role in innate immunity by disrupting the interaction between PYCARD and NLRP3, thereby regulating the NLRP3 inflammasome. May also inhibit NF-kappa-B signaling distally by affecting the nuclear accumulation of RELA. This Homo sapiens (Human) protein is Pyrin domain-containing protein 2.